Here is a 344-residue protein sequence, read N- to C-terminus: MKKNKVPTELIFSLPNDLLVNILARVSRLDYPILSLVSKRFSSVLTLPELYQTRSLVGLTENCLYVCLLSSRADRIPSWFKLCRRPILASDTRKSSGYVLATIPIPHSPPLHRSSLVAVGSNIYNIGGSISQSQSSSVSILDCWSHTWLEGPSMQVEREYPSASLLDGKIYVTGGCRLTFHGCGDQTDNVVVDGKLHSCGGYKGVAYNPNDGRWDSLGSEMNLGLKWSSSCVIENVIYYYYHNENIKWYDTKVRSWRTLNGLKTLPRFARYANVRLADYGGKMALFWDKFTGCGNQNRMIWCAIIALERRNNEEIWGNVEWSDAVLPHQVPMAYVCEYVVAVNV.

The 47-residue stretch at 8-54 (TELIFSLPNDLLVNILARVSRLDYPILSLVSKRFSSVLTLPELYQTR) folds into the F-box domain. 4 Kelch repeats span residues 122-168 (NIYN…LLDG), 170-195 (IYVT…VDGK), 196-241 (LHSC…YYYY), and 243-276 (NENI…NVRL).

The protein is Putative F-box/kelch-repeat protein At1g19930 of Arabidopsis thaliana (Mouse-ear cress).